The chain runs to 125 residues: Fluoride-specific ion channel FluC (125 aa).

Transmembrane regions (helical) follow at residues 4-24 (LWVA…GVWI) and 34-54 (YGTF…LTVL). Residues Gly74 and Thr77 each coordinate Na(+). Residues 99 to 119 (VLYFGSSLALGILAVWLGMVV) traverse the membrane as a helical segment.

This sequence belongs to the fluoride channel Fluc/FEX (TC 1.A.43) family.

Its subcellular location is the cell inner membrane. The enzyme catalyses fluoride(in) = fluoride(out). Its activity is regulated as follows. Na(+) is not transported, but it plays an essential structural role and its presence is essential for fluoride channel function. Its function is as follows. Fluoride-specific ion channel. Important for reducing fluoride concentration in the cell, thus reducing its toxicity. The polypeptide is Fluoride-specific ion channel FluC (Acidobacterium capsulatum (strain ATCC 51196 / DSM 11244 / BCRC 80197 / JCM 7670 / NBRC 15755 / NCIMB 13165 / 161)).